Here is a 271-residue protein sequence, read N- to C-terminus: 4-hydroxy-tetrahydrodipicolinate reductase (271 aa).

NAD(+) is bound by residues 11-16 (GGSGRM) and Glu37. Arg38 is a binding site for NADP(+). NAD(+) is bound by residues 101–103 (GTT) and 125–128 (APNM). His158 functions as the Proton donor/acceptor in the catalytic mechanism. His159 contacts (S)-2,3,4,5-tetrahydrodipicolinate. The Proton donor role is filled by Lys162. A (S)-2,3,4,5-tetrahydrodipicolinate-binding site is contributed by 168 to 169 (GT).

Belongs to the DapB family.

Its subcellular location is the cytoplasm. The catalysed reaction is (S)-2,3,4,5-tetrahydrodipicolinate + NAD(+) + H2O = (2S,4S)-4-hydroxy-2,3,4,5-tetrahydrodipicolinate + NADH + H(+). It catalyses the reaction (S)-2,3,4,5-tetrahydrodipicolinate + NADP(+) + H2O = (2S,4S)-4-hydroxy-2,3,4,5-tetrahydrodipicolinate + NADPH + H(+). The protein operates within amino-acid biosynthesis; L-lysine biosynthesis via DAP pathway; (S)-tetrahydrodipicolinate from L-aspartate: step 4/4. Catalyzes the conversion of 4-hydroxy-tetrahydrodipicolinate (HTPA) to tetrahydrodipicolinate. This chain is 4-hydroxy-tetrahydrodipicolinate reductase, found in Shewanella loihica (strain ATCC BAA-1088 / PV-4).